Consider the following 555-residue polypeptide: Vacuolar fusion protein MON1 homolog A (555 aa).

Residues 1 to 12 (MAADMQRKRSSE) are compositionally biased toward basic and acidic residues. Residues 1 to 90 (MAADMQRKRS…PPLATDMRQI (90 aa)) are disordered. Phosphoserine occurs at positions 31 and 56. Phosphothreonine is present on T61. S91 bears the Phosphoserine mark. Residues 112–149 (MLPGSSEDWPESPGAARRPATEPPRDGAGEGDEEEAAE) are disordered. Positions 130–139 (PATEPPRDGA) are enriched in basic and acidic residues.

The protein belongs to the MON1/SAND family. As to quaternary structure, interacts with CCZ1. Found in a complex with RMC1, CCZ1, MON1A and MON1B. The MON1A-CCZ1B complex interacts with RIMOC1. The MON1A-CCZ1B complex interacts with RAB7A and this interaction is enhanced in the presence of RIMOC1.

Functionally, plays an important role in membrane trafficking through the secretory apparatus. Not involved in endocytic trafficking to lysosomes. Acts in concert with CCZ1, as a guanine exchange factor (GEF) for RAB7, promotes the exchange of GDP to GTP, converting it from an inactive GDP-bound form into an active GTP-bound form. The polypeptide is Vacuolar fusion protein MON1 homolog A (MON1A) (Bos taurus (Bovine)).